The following is a 216-amino-acid chain: Ras-related protein RABA1b (216 aa).

Residue 20-27 participates in GTP binding; the sequence is GDSGVGKS. The short motif at 42–50 is the Effector region element; it reads SKSTIGVEF. GTP contacts are provided by residues 68–72, 126–129, and 156–157; these read DTAGQ, NKSD, and SA. S-geranylgeranyl cysteine attachment occurs at residues Cys213 and Cys214.

This sequence belongs to the small GTPase superfamily. Rab family.

It is found in the cell membrane. In terms of biological role, intracellular vesicle trafficking and protein transport. The polypeptide is Ras-related protein RABA1b (RABA1B) (Arabidopsis thaliana (Mouse-ear cress)).